The following is a 282-amino-acid chain: Bifunctional protein FolD (282 aa).

Residues 165–167 (NRS), Ser-190, and Ile-231 contribute to the NADP(+) site.

This sequence belongs to the tetrahydrofolate dehydrogenase/cyclohydrolase family. Homodimer.

It carries out the reaction (6R)-5,10-methylene-5,6,7,8-tetrahydrofolate + NADP(+) = (6R)-5,10-methenyltetrahydrofolate + NADPH. The catalysed reaction is (6R)-5,10-methenyltetrahydrofolate + H2O = (6R)-10-formyltetrahydrofolate + H(+). Its pathway is one-carbon metabolism; tetrahydrofolate interconversion. Functionally, catalyzes the oxidation of 5,10-methylenetetrahydrofolate to 5,10-methenyltetrahydrofolate and then the hydrolysis of 5,10-methenyltetrahydrofolate to 10-formyltetrahydrofolate. This is Bifunctional protein FolD from Clostridium botulinum (strain ATCC 19397 / Type A).